The chain runs to 337 residues: Glyceraldehyde-3-phosphate dehydrogenase (337 aa).

Residues 12 to 13 (RI), Asp-34, and Arg-79 each bind NAD(+). D-glyceraldehyde 3-phosphate-binding positions include 150-152 (SCT), Thr-181, 210-211 (TG), and Arg-233. Cys-151 (nucleophile) is an active-site residue. Residue Asn-315 coordinates NAD(+).

It belongs to the glyceraldehyde-3-phosphate dehydrogenase family. Homotetramer.

The protein localises to the cytoplasm. The enzyme catalyses D-glyceraldehyde 3-phosphate + phosphate + NAD(+) = (2R)-3-phospho-glyceroyl phosphate + NADH + H(+). It functions in the pathway carbohydrate degradation; glycolysis; pyruvate from D-glyceraldehyde 3-phosphate: step 1/5. This chain is Glyceraldehyde-3-phosphate dehydrogenase (GPD), found in Ajellomyces capsulatus (Darling's disease fungus).